The sequence spans 294 residues: uncharacterized protein (294 aa).

An N-terminal signal peptide occupies residues Met1 to Ala18.

This is an uncharacterized protein from Rickettsia bellii (strain RML369-C).